The sequence spans 541 residues: 2-succinyl-5-enolpyruvyl-6-hydroxy-3-cyclohexene-1-carboxylate synthase (541 aa).

This sequence belongs to the TPP enzyme family. MenD subfamily. As to quaternary structure, homodimer. Mg(2+) is required as a cofactor. Requires Mn(2+) as cofactor. The cofactor is thiamine diphosphate.

The catalysed reaction is isochorismate + 2-oxoglutarate + H(+) = 5-enolpyruvoyl-6-hydroxy-2-succinyl-cyclohex-3-ene-1-carboxylate + CO2. The protein operates within quinol/quinone metabolism; 1,4-dihydroxy-2-naphthoate biosynthesis; 1,4-dihydroxy-2-naphthoate from chorismate: step 2/7. Its pathway is quinol/quinone metabolism; menaquinone biosynthesis. Functionally, catalyzes the thiamine diphosphate-dependent decarboxylation of 2-oxoglutarate and the subsequent addition of the resulting succinic semialdehyde-thiamine pyrophosphate anion to isochorismate to yield 2-succinyl-5-enolpyruvyl-6-hydroxy-3-cyclohexene-1-carboxylate (SEPHCHC). The polypeptide is 2-succinyl-5-enolpyruvyl-6-hydroxy-3-cyclohexene-1-carboxylate synthase (Rhodococcus jostii (strain RHA1)).